Reading from the N-terminus, the 359-residue chain is UDP-N-acetylglucosamine--N-acetylmuramyl-(pentapeptide) pyrophosphoryl-undecaprenol N-acetylglucosamine transferase (359 aa).

Residues 15 to 17 (TGG), asparagine 127, arginine 166, serine 191, isoleucine 245, 264 to 269 (ALTVSE), and glutamine 290 each bind UDP-N-acetyl-alpha-D-glucosamine.

It belongs to the glycosyltransferase 28 family. MurG subfamily.

It localises to the cell inner membrane. The enzyme catalyses di-trans,octa-cis-undecaprenyl diphospho-N-acetyl-alpha-D-muramoyl-L-alanyl-D-glutamyl-meso-2,6-diaminopimeloyl-D-alanyl-D-alanine + UDP-N-acetyl-alpha-D-glucosamine = di-trans,octa-cis-undecaprenyl diphospho-[N-acetyl-alpha-D-glucosaminyl-(1-&gt;4)]-N-acetyl-alpha-D-muramoyl-L-alanyl-D-glutamyl-meso-2,6-diaminopimeloyl-D-alanyl-D-alanine + UDP + H(+). Its pathway is cell wall biogenesis; peptidoglycan biosynthesis. Its function is as follows. Cell wall formation. Catalyzes the transfer of a GlcNAc subunit on undecaprenyl-pyrophosphoryl-MurNAc-pentapeptide (lipid intermediate I) to form undecaprenyl-pyrophosphoryl-MurNAc-(pentapeptide)GlcNAc (lipid intermediate II). The protein is UDP-N-acetylglucosamine--N-acetylmuramyl-(pentapeptide) pyrophosphoryl-undecaprenol N-acetylglucosamine transferase of Pseudomonas putida (strain ATCC 700007 / DSM 6899 / JCM 31910 / BCRC 17059 / LMG 24140 / F1).